The sequence spans 298 residues: MTTHRPLFYGSITALITPMDNHGEVDFNALKKLVEYHIASGTHAIVSVGTTGESATLSIAENVKTILKTLEFADGRIPVIAGTGANATSEAITMTKLLNDSGVAGCLSVVPYYNKPTQEGMYQHFKAIAECTDIPQILYNVPSRTGSDLLPETVGRLAQISNIIGIKEATGDVSRVAKIKQAAGDDFIFLSGDDATGLESMKLGGQGVISVTNNIAAADMAKMCELALAGKFDEAEIINDKLSALHKDLFIESNPIPVKWAAYKLGLIPEPILRLPLTTLSEQSQPKVIEALKNAGLL.

Pyruvate is bound at residue Thr-51. Tyr-139 functions as the Proton donor/acceptor in the catalytic mechanism. Lys-167 acts as the Schiff-base intermediate with substrate in catalysis. Position 209 (Ile-209) interacts with pyruvate.

It belongs to the DapA family. Homotetramer; dimer of dimers.

It localises to the cytoplasm. It catalyses the reaction L-aspartate 4-semialdehyde + pyruvate = (2S,4S)-4-hydroxy-2,3,4,5-tetrahydrodipicolinate + H2O + H(+). It functions in the pathway amino-acid biosynthesis; L-lysine biosynthesis via DAP pathway; (S)-tetrahydrodipicolinate from L-aspartate: step 3/4. In terms of biological role, catalyzes the condensation of (S)-aspartate-beta-semialdehyde [(S)-ASA] and pyruvate to 4-hydroxy-tetrahydrodipicolinate (HTPA). This Histophilus somni (strain 2336) (Haemophilus somnus) protein is 4-hydroxy-tetrahydrodipicolinate synthase.